A 222-amino-acid polypeptide reads, in one-letter code: UPF0758 protein YicR (222 aa).

The 123-residue stretch at 100–222 folds into the MPN domain; sequence PLLSPEMTRE…YVSFAERGWI (123 aa). Residues His-171, His-173, and Asp-184 each contribute to the Zn(2+) site. A JAMM motif motif is present at residues 171–184; sequence HNHPSGCAEPSKAD.

This sequence belongs to the UPF0758 family. YicR subfamily.

This chain is UPF0758 protein YicR, found in Escherichia coli (strain 55989 / EAEC).